The sequence spans 543 residues: MRKPAAGFLPSLLKVLLLPLAPAAAQDSTQASTPGSPLSPTEYERFFALLTPTWKAETTCRLRATHGCRNPTLVQLDQYENHGLVPDGAVCSNLPYASWFESFCQFTHYRCSNHVYYAKRVLCSQPVSILSPNTLKEIEASAEVSPTTMTSPISPHFTVTERQTFQPWPERLSNNVEELLQSSLSLGGQEQAPEHKQEQGVEHRQEPTQEHKQEEGQKQEEQEEEQEEEGKQEEGQGTKEGREAVSQLQTDSEPKFHSESLSSNPSSFAPRVREVESTPMIMENIQELIRSAQEIDEMNEIYDENSYWRNQNPGSLLQLPHTEALLVLCYSIVENTCIITPTAKAWKYMEEEILGFGKSVCDSLGRRHMSTCALCDFCSLKLEQCHSEASLQRQQCDTSHKTPFVSPLLASQSLSIGNQVGSPESGRFYGLDLYGGLHMDFWCARLATKGCEDVRVSGWLQTEFLSFQDGDFPTKICDTDYIQYPNYCSFKSQQCLMRNRNRKVSRMRCLQNETYSALSPGKSEDVVLRWSQEFSTLTLGQFG.

Positions 1-25 are cleaved as a signal peptide; it reads MRKPAAGFLPSLLKVLLLPLAPAAA. The tract at residues 26–106 is pro-ACR binding; that stretch reads QDSTQASTPG…ASWFESFCQF (81 aa). Positions 26-273 are cleaved as a propeptide — removed in mature form; it reads QDSTQASTPG…NPSSFAPRVR (248 aa). The disordered stretch occupies residues 185–272; it reads SLGGQEQAPE…SNPSSFAPRV (88 aa). A compositionally biased stretch (basic and acidic residues) spans 192-220; the sequence is APEHKQEQGVEHRQEPTQEHKQEEGQKQE. Positions 221–231 are enriched in acidic residues; sequence EQEEEQEEEGK. A compositionally biased stretch (basic and acidic residues) spans 232 to 243; that stretch reads QEEGQGTKEGRE. Positions 319–427 are pro-ACR binding; sequence LPHTEALLVL…NQVGSPESGR (109 aa).

As to quaternary structure, binds proacrosin (pro-ACR). Does not bind the mature form of ACR. In terms of processing, phosphorylated on Tyr residues in capacitated sperm. The N-terminus is blocked. Post-translationally, synthesized as a 60-kDa precursor, the 32-kDa mature form is post-translationally produced by the removal of the N-terminal half of the precursor during sperm maturation in the testis and/or epididymis. Expression restricted to testis in normal tissue. Expressed in a wide spectrum of cancers, including bladder, breast, liver, lung and colon cancers.

The protein resides in the secreted. It localises to the cytoplasmic vesicle. Its subcellular location is the secretory vesicle. It is found in the acrosome. In terms of biological role, acrosomal protein that maintains proacrosin (pro-ACR) as an enzymatically inactive zymogen in the acrosome. Involved also in the acrosome formation. The sequence is that of Acrosin-binding protein from Homo sapiens (Human).